The following is a 315-amino-acid chain: Taste receptor type 2 member 3 (315 aa).

At 1–5 (MGLTE) the chain is on the extracellular side. The chain crosses the membrane as a helical span at residues 6 to 26 (GLFLILSGTQFALGILVNCFI). Over 27–41 (GLVNGSSWFKTKRMS) the chain is Cytoplasmic. The helical transmembrane segment at 42–62 (LSDFIITTLAFLRIILLCIIL) threads the bilayer. The Extracellular segment spans residues 63–93 (TDSFLIEFSPNAHDSGVIMQIIDVSWTFTNH). Residues 94–114 (LSIWLATCLGVLYCLKIASFS) form a helical membrane-spanning segment. Residues 115-127 (HPTFLWLKWRVSR) are Cytoplasmic-facing. The chain crosses the membrane as a helical span at residues 128–148 (VMVWMLLGVLLLSCGSTASLI). Residues 149-185 (NEFKLYSVFRGIEATXNVTEHFRKKRSEYYLIHVLGT) are Extracellular-facing. An N-linked (GlcNAc...) asparagine glycan is attached at Asn-165. The helical transmembrane segment at 186-206 (LWYLPPLIVSLAAYFLLIFSL) threads the bilayer. The Cytoplasmic portion of the chain corresponds to 207–233 (GRHTRQMLQNGTSSRDPSTEAHKRAIR). Residues 234 to 254 (IILSSFFLFLLYFLAFLIASF) form a helical membrane-spanning segment. The Extracellular segment spans residues 255–265 (GNFLPKTKMAK). Residues 266 to 286 (MIGEVMTMFYPAGHSFILILG) form a helical membrane-spanning segment. At 287–315 (NSKLKQTFVEMLRCESGHLKPGSKGPIFS) the chain is on the cytoplasmic side.

It belongs to the G-protein coupled receptor T2R family.

Its subcellular location is the membrane. In terms of biological role, gustducin-coupled receptor implicated in the perception of bitter compounds in the oral cavity and the gastrointestinal tract. Signals through PLCB2 and the calcium-regulated cation channel TRPM5. In Pongo pygmaeus (Bornean orangutan), this protein is Taste receptor type 2 member 3 (TAS2R3).